Reading from the N-terminus, the 506-residue chain is Galactose/methyl galactoside import ATP-binding protein MglA (506 aa).

2 ABC transporter domains span residues 14–249 (LTMT…VGRE) and 260–506 (TPKE…AKYL). 46–53 (GENGAGKS) serves as a coordination point for ATP.

This sequence belongs to the ABC transporter superfamily. Galactose/methyl galactoside importer (TC 3.A.1.2.3) family. In terms of assembly, the complex is composed of one ATP-binding protein (MglA), two transmembrane proteins (MglC) and a solute-binding protein (MglB).

Its subcellular location is the cell inner membrane. It carries out the reaction D-galactose(out) + ATP + H2O = D-galactose(in) + ADP + phosphate + H(+). The enzyme catalyses methyl beta-D-galactoside(out) + ATP + H2O = methyl beta-D-galactoside(in) + ADP + phosphate + H(+). Part of the ABC transporter complex MglABC involved in galactose/methyl galactoside import. Responsible for energy coupling to the transport system. In Pasteurella multocida (strain Pm70), this protein is Galactose/methyl galactoside import ATP-binding protein MglA.